A 456-amino-acid polypeptide reads, in one-letter code: N(6)-adenosine-methyltransferase non-catalytic subunit METTL14 (456 aa).

The tract at residues 45–76 is disordered; it reads AETRETCRASYDTSAPNAKRKYQDEGETDEDK. 2 interaction with METTL3 regions span residues 135-136 and 237-238; these read RD and SG. Positions 245–254 are positively charged region required for RNA-binding; it reads RVCLRKWGYR. 2 interaction with METTL3 regions span residues 255–258 and 278–287; these read RCED and KAVFQRTKEH. Residues 297–298 form a positively charged region required for RNA-binding region; it reads KR. Positions 308 to 312 are interaction with METTL3; it reads NVDID. The interval 393–456 is disordered; it reads ERLRPKSPPP…GAHRGGFPPR (64 aa). S399 carries the phosphoserine modification. Gly residues predominate over residues 409–423; sequence GGGAPRGGGRGGTSA. Over residues 425-440 the composition is skewed to basic and acidic residues; that stretch reads RGRERNRSNFRGERGG. Over residues 441–450 the composition is skewed to gly residues; that stretch reads FRGGRGGAHR.

Belongs to the MT-A70-like family. As to quaternary structure, heterodimer; heterodimerizes with METTL3 to form an antiparallel heterodimer that constitutes an active methyltransferase. Component of the WMM complex, a N6-methyltransferase complex composed of a catalytic subcomplex, named MAC, and of an associated subcomplex, named MACOM. The MAC subcomplex is composed of METTL3 and METTL14. The MACOM subcomplex is composed of WTAP, ZC3H13, CBLL1/HAKAI, VIRMA, and, in some cases of RBM15 (RBM15 or RBM15B).

Its subcellular location is the nucleus. Its function is as follows. The METTL3-METTL14 heterodimer forms a N6-methyltransferase complex that methylates adenosine residues at the N(6) position of some mRNAs and regulates the circadian clock, differentiation of embryonic stem cells and cortical neurogenesis. In the heterodimer formed with METTL3, METTL14 constitutes the RNA-binding scaffold that recognizes the substrate rather than the catalytic core. N6-methyladenosine (m6A), which takes place at the 5'-[AG]GAC-3' consensus sites of some mRNAs, plays a role in mRNA stability and processing. M6A acts as a key regulator of mRNA stability by promoting mRNA destabilization and degradation. In embryonic stem cells (ESCs), m6A methylation of mRNAs encoding key naive pluripotency-promoting transcripts results in transcript destabilization. M6A regulates spermatogonial differentiation and meiosis and is essential for male fertility and spermatogenesis. M6A also regulates cortical neurogenesis: m6A methylation of transcripts related to transcription factors, neural stem cells, the cell cycle and neuronal differentiation during brain development promotes their destabilization and decay, promoting differentiation of radial glial cells. This chain is N(6)-adenosine-methyltransferase non-catalytic subunit METTL14 (METTL14), found in Bos taurus (Bovine).